The chain runs to 563 residues: MRKRRTLTAPSHFNSMSAALNPMKMAAMQSQPTVDDSWAASISRIMSLTAGDRHKFSSQPFANRLDAILEAVVPSRKDPTHEKVLTIVNALIENGAIRRDEGAGVYDALLHRVSKYNSINTQSNLERLAGDVREAVAQQVRIAAGNLGSLTALNSFLARLPANVERGQDNYTGFLSALKLLVSEVPNTEVYQSGPHYFLQSSRNGTQTVNLTNAFENLKPLWGVKAPTMERLSISALLTPNTRLLLLLVSPFTDSVSISRDSYLGYLLTLYREALGRNHLDERTLEEVTEVSKAMGNENINNLQATLNFLLTNRQKKIPKDYSLTPEEERIVRFIQQAVSLRMMQENLSPTEALDVTAANMEPSFYANNRDFINKLMDYFHRAAAIAPDYFLGAVMNPRWLPPEGFFTGVFDFPERDNYIWDGLDSSLDLTRQDAMRFLEEKFIDDDQRTESRSVSRVPTPASSRRSSVAMASDSLIRPMNNDKNSLREIEVLADKLARWKTYKRESEEARESLPVIVRPKKYSSAISSDESDDGMSKPDKFLKFEGSGNPFAHLRPKLGRCL.

The segment at Met-1–Asn-117 is peripentonal hexon-tethering domain. A binding to hexon-linking protein region spans residues Gly-148–Asp-261. A Phosphoserine; by host modification is found at Ser-235. Thr-284 carries the post-translational modification Phosphothreonine; by host. Residues Arg-449–Met-471 form a disordered region. Phosphoserine; by host is present on residues Ser-452 and Ser-456. Low complexity predominate over residues Ala-462 to Met-471. 2 positions are modified to phosphoserine; by host: Ser-475 and Ser-486. The tract at residues Ser-524 to Leu-543 is disordered. Residues Gly-549 to Leu-563 constitute a propeptide that is removed on maturation.

This sequence belongs to the adenoviridae hexon-linking protein IIIa family. Interacts with hexon proteins; this interaction tethers the peripentonal hexons to hexons situated in the facet. Interacts with the penton protein (via N-terminus). Interacts with packaging protein 3; this interaction is required to promote correct genome packaging. In terms of processing, cleaved near the C-terminus by the viral protease during virion maturation to form the mature protein.

It is found in the virion. It localises to the host nucleus. Its function is as follows. Structural component of the virion that acts as a cement protein on the capsid exterior which mediates the interactions between the hexons, including the peripentonal hexons, and reaches all the way to the penton vertices. Two hexon linking proteins IIIa, one from each facet, stabilize the unique edge interface between a pair of facets. As the virus enters the host cell, hexon linking proteins IIIa are shed concomitant with virion acidification in the endosome. During virus assembly, seems to play a role in the serotype specificity of the packaging of viral DNA via its interaction with packaging protein 3. The polypeptide is Pre-hexon-linking protein IIIa (Canis lupus familiaris (Dog)).